Reading from the N-terminus, the 141-residue chain is Hemoglobin subunit alpha-A (141 aa).

The 141-residue stretch at Val1–Arg141 folds into the Globin domain. His58 contacts O2. Position 87 (His87) interacts with heme b.

The protein belongs to the globin family. Heterotetramer of two alpha chains and two beta chains. In terms of tissue distribution, red blood cells.

Involved in oxygen transport from the lung to the various peripheral tissues. This chain is Hemoglobin subunit alpha-A (HBAA), found in Passer montanus (Eurasian tree sparrow).